The sequence spans 212 residues: Cytidylate kinase (212 aa).

Residue 7–15 (GPAASGKGT) coordinates ATP.

The protein belongs to the cytidylate kinase family. Type 1 subfamily.

It is found in the cytoplasm. The catalysed reaction is CMP + ATP = CDP + ADP. It catalyses the reaction dCMP + ATP = dCDP + ADP. In Bradyrhizobium sp. (strain ORS 278), this protein is Cytidylate kinase.